We begin with the raw amino-acid sequence, 423 residues long: Acyl-coenzyme A diphosphatase FITM2 (423 aa).

The disordered stretch occupies residues 1–47; it reads MATKRRPLRPNLGGTAGSPSSSGSNMNFRPGGPDITRSEARGTRPTA. At 1 to 75 the chain is on the cytoplasmic side; that stretch reads MATKRRPLRP…KTIFFNTDLK (75 aa). A helical membrane pass occupies residues 76–96; it reads VALYLGSLFVISVIGDFVPFP. Over 97–113 the chain is Lumenal; the sequence is KTYFARSDNLFNQYFVK. Residues 114 to 134 form a helical membrane-spanning segment; sequence IGWGWTLLFVVPFLVLSAYTI. Residues 135–146 are Cytoplasmic-facing; the sequence is TCGDHKRMLRHH. The chain crosses the membrane as a helical span at residues 147 to 167; sequence FPRIVIATFFWFFWTKLFNVV. The Lumenal portion of the chain corresponds to 168 to 191; the sequence is ENSYGRCTTKGYATKSSCLKAGHL. The chain crosses the membrane as a helical span at residues 192-212; the sequence is WKGFDISGHAFILIHSSLVLI. The active site involves His200. At 213-270 the chain is on the cytoplasmic side; the sequence is EEARPIIRWETIKEHIRNERHNRSTAENSGTNPLRTLNEEQMRSLQFLYKRLTPIIRT. Residues 271–291 traverse the membrane as a helical segment; sequence LFIGMAALQLLWDIMLVGTML. Residues 292-299 are Lumenal-facing; the sequence is YYHRMIEK. His294 is an active-site residue. Residues 300 to 320 form a helical membrane-spanning segment; it reads VISGIIAILTWYFTYRFWYPT. The Cytoplasmic portion of the chain corresponds to 321 to 423; that stretch reads PGLLPEAPGN…RDREQQTLES (103 aa). 2 disordered regions span residues 344–381 and 400–423; these read FKRPSHLSTGAATTSSGSNSSRTNLNGKAATTGVPRDQ and AAANLLMSDQQKRERDREQQTLES. Low complexity predominate over residues 351–367; the sequence is STGAATTSSGSNSSRTN. A compositionally biased stretch (basic and acidic residues) spans 409–423; sequence QQKRERDREQQTLES.

This sequence belongs to the FIT family. FIT2 subfamily.

It localises to the endoplasmic reticulum membrane. The enzyme catalyses an acyl-CoA + H2O = an acyl-4'-phosphopantetheine + adenosine 3',5'-bisphosphate + 2 H(+). Its function is as follows. Fatty acyl-coenzyme A (CoA) diphosphatase that hydrolyzes fatty acyl-CoA to yield acyl-4'-phosphopantetheine and adenosine 3',5'-bisphosphate. Preferentially hydrolyzes unsaturated long-chain acyl-CoA substrates in the endoplasmic reticulum (ER) lumen. This catalytic activity is required for maintaining ER structure and for lipid droplets (LDs) biogenesis, which are lipid storage organelles involved in maintaining lipid and energy homeostasis. May directly bind to diacylglycerol (DAGs) and triacylglycerol, which is also important for LD biogenesis. May support directional budding of nacent LDs from the ER into the cytosol by reducing DAG levels at sites of LD formation. Plays a role in the regulation of cell morphology and cytoskeletal organization. Required for correct morphology of nociceptive multi-dendritic sensory neurons. Required for normal mechanical amplification in hearing. This is Acyl-coenzyme A diphosphatase FITM2 from Drosophila melanogaster (Fruit fly).